The sequence spans 690 residues: Protein arginine N-methyltransferase 7 (690 aa).

2 consecutive SAM-dependent MTase PRMT-type domains span residues 14-357 and 366-690; these read QNSW…YSLW and TKSV…QKKL.

It belongs to the class I-like SAM-binding methyltransferase superfamily. Protein arginine N-methyltransferase family. PRMT7 subfamily.

Functionally, essential arginine methyltransferase that can both catalyze the formation of omega-N monomethylarginine (MMA) and symmetrical dimethylarginine (sDMA). Specifically mediates the symmetrical dimethylation of arginine residues in the small nuclear ribonucleoproteins SmD1 and SmD3. This is Protein arginine N-methyltransferase 7 (Art7) from Drosophila erecta (Fruit fly).